Consider the following 721-residue polypeptide: Exocyst complex component 3-like protein 4 (721 aa).

Disordered stretches follow at residues 1–52 (MPLP…SLGM) and 94–135 (GLTA…QAES). The span at 22–37 (SQTLPVTTWKSNSMKE) shows a compositional bias: polar residues. Serine 515 carries the phosphoserine modification.

Belongs to the SEC6 family.

The protein is Exocyst complex component 3-like protein 4 (Exoc3l4) of Mus musculus (Mouse).